Consider the following 603-residue polypeptide: Elongation factor 4 (603 aa).

The tr-type G domain maps to 7-189 (SRIRNFCIIA…SIVHLVPPPS (183 aa)). GTP contacts are provided by residues 19–24 (DHGKST) and 136–139 (NKID).

The protein belongs to the TRAFAC class translation factor GTPase superfamily. Classic translation factor GTPase family. LepA subfamily.

It is found in the cell inner membrane. It carries out the reaction GTP + H2O = GDP + phosphate + H(+). Functionally, required for accurate and efficient protein synthesis under certain stress conditions. May act as a fidelity factor of the translation reaction, by catalyzing a one-codon backward translocation of tRNAs on improperly translocated ribosomes. Back-translocation proceeds from a post-translocation (POST) complex to a pre-translocation (PRE) complex, thus giving elongation factor G a second chance to translocate the tRNAs correctly. Binds to ribosomes in a GTP-dependent manner. This is Elongation factor 4 from Crocosphaera subtropica (strain ATCC 51142 / BH68) (Cyanothece sp. (strain ATCC 51142)).